Consider the following 398-residue polypeptide: Acetate kinase (398 aa).

Asn-8 contacts Mg(2+). Lys-15 contacts ATP. Position 92 (Arg-92) interacts with substrate. The active-site Proton donor/acceptor is Asp-149. Residues 209-213, 283-285, and 331-335 contribute to the ATP site; these read HLGNG, DFR, and GVGEN. Mg(2+) is bound at residue Glu-385.

It belongs to the acetokinase family. As to quaternary structure, homodimer. Requires Mg(2+) as cofactor. It depends on Mn(2+) as a cofactor.

It localises to the cytoplasm. It carries out the reaction acetate + ATP = acetyl phosphate + ADP. The protein operates within metabolic intermediate biosynthesis; acetyl-CoA biosynthesis; acetyl-CoA from acetate: step 1/2. Functionally, catalyzes the formation of acetyl phosphate from acetate and ATP. Can also catalyze the reverse reaction. The protein is Acetate kinase of Corynebacterium efficiens (strain DSM 44549 / YS-314 / AJ 12310 / JCM 11189 / NBRC 100395).